A 544-amino-acid chain; its full sequence is Esterase P (544 aa).

A signal peptide spans 1 to 19 (MSIFKRLLCLTLLWIAALE). A glycan (N-linked (GlcNAc...) asparagine) is linked at Asn75. The cysteines at positions 83 and 102 are disulfide-linked. A glycan (N-linked (GlcNAc...) asparagine) is linked at Asn114. Ser206 acts as the Acyl-ester intermediate in catalysis. A disulfide bridge links Cys258 with Cys270. Asn262 and Asn456 each carry an N-linked (GlcNAc...) asparagine glycan. Catalysis depends on His466, which acts as the Charge relay system. A disulfide bridge links Cys514 with Cys535.

The protein belongs to the type-B carboxylesterase/lipase family. In terms of assembly, monomer.

It is found in the secreted. The catalysed reaction is a carboxylic ester + H2O = an alcohol + a carboxylate + H(+). The polypeptide is Esterase P (Est-P) (Drosophila melanogaster (Fruit fly)).